The sequence spans 462 residues: 3beta-hydroxysteroid dehydrogenase/Delta(5)-Delta(4) isomerase 1 (462 aa).

NAD(+)-binding positions include 51–56, Tyr-220, and Lys-224; that span reads GGAGHL. Residue Lys-224 is the Proton donor of the active site. The next 2 membrane-spanning stretches (helical) occupy residues 321-341 and 428-448; these read VGTFSFWTPLNIALGFSSSMI and VAVLVLGTILIFVAVFSFTFW.

Belongs to the 3-beta-HSD family. In terms of tissue distribution, expressed exclusively in the neuron-like XXX(L/R) cells through all four larval stages and becomes fainter in adults.

The protein resides in the membrane. It carries out the reaction a 3beta-hydroxy-Delta(5)-steroid + NAD(+) = a 3-oxo-Delta(5)-steroid + NADH + H(+). The catalysed reaction is cholesterol + NAD(+) = cholest-5-en-3-one + NADH + H(+). The enzyme catalyses a 3-oxo-Delta(5)-steroid = a 3-oxo-Delta(4)-steroid. It catalyses the reaction cholest-5-en-3-one = cholest-4-en-3-one. Its pathway is steroid hormone biosynthesis; dafachronic acid biosynthesis. Its function is as follows. Hydroxysteroid dehydrogenase involved in the biosynthesis of dafrachonic acids. Catalyzes the dehydrogenation of cholesterol or its derivatives and the isomerization of the double carbon bond on the sterol ring. Modifies sterols into a Delta(4)-3-keto-sterols such as cholest-4-en-3-one, precursor of Delta(4)-dafachronic acid. Contributes to the production of Delta(7)-dafachronic acid in the XXX cells. Dafachronic acids act as ligands and bind directly to the nuclear hormone receptor (NHR) daf-12 suppressing dauer formation and inducing reproductive growth. Acts in parallel to AKT-1 to promote reproductive development via DAF-16/FoxO and DAF-12. The protein is 3beta-hydroxysteroid dehydrogenase/Delta(5)-Delta(4) isomerase 1 of Caenorhabditis elegans.